The primary structure comprises 537 residues: Woronin body major protein hexA (537 aa).

3 stretches are compositionally biased toward basic and acidic residues: residues 1–17, 59–70, and 116–134; these read MYSVESKFERDSRRDAQ, DRTSHVEREDTR, and DSRVPEVELSRERWKRSEN. Disordered regions lie at residues 1–20, 59–79, 116–200, and 269–295; these read MYSVESKFERDSRRDAQRTA, DRTSHVEREDTRTSAPLPDPR, DSRV…KPVY, and PKPLETRKGDSFSRSELTVESVPSRPS. Over residues 135 to 144 the composition is skewed to low complexity; it reads NAKQNKNKNN. Positions 272-281 are enriched in basic and acidic residues; that stretch reads LETRKGDSFS.

This sequence belongs to the eIF-5A family. Hex1 subfamily. Forms oligomers. Self-assembles into hexagonal rods. Binds directly or indirectly to the Woronin body tether lah.

Its subcellular location is the cell septum. The protein resides in the cytoplasm. Its function is as follows. Major component of Woronin bodies, fungal-specific organelles that occlude septal pores in order to separate intact from damaged compartments. HexA binds directly or indirectly to the Woronin body tether that in turn is anchored at the rim of the septal pore. Woronin bodies are important for stress resistance and virulence. This is Woronin body major protein hexA from Aspergillus fumigatus (strain ATCC MYA-4609 / CBS 101355 / FGSC A1100 / Af293) (Neosartorya fumigata).